The primary structure comprises 585 residues: Serine/threonine-protein kinase Nek3 (585 aa).

Residues 4–258 form the Protein kinase domain; sequence YEVLEQIGKG…AAELLKHPHL (255 aa). ATP contacts are provided by residues 10-18 and lysine 33; that span reads IGKGSFGSA. Aspartate 129 serves as the catalytic Proton acceptor. 2 disordered regions span residues 354–413 and 489–511; these read GNHS…TPVN and DSSK…SNPL. Composition is skewed to polar residues over residues 400–413 and 498–511; these read RASQ…TPVN and SSDP…SNPL.

It belongs to the protein kinase superfamily. NEK Ser/Thr protein kinase family. NIMA subfamily. In terms of assembly, interacts with PLIM2B. In terms of tissue distribution, expressed in pollen grains.

The enzyme catalyses L-seryl-[protein] + ATP = O-phospho-L-seryl-[protein] + ADP + H(+). It catalyses the reaction L-threonyl-[protein] + ATP = O-phospho-L-threonyl-[protein] + ADP + H(+). Functionally, may be involved in plant development processes. May function downstream of DCW11 in retrograde signaling from the mitochondria to the nucleus. Seems to be involved in the mechanism of cytoplasmic male sterility (CMS) occurrence. This is Serine/threonine-protein kinase Nek3 from Oryza sativa subsp. japonica (Rice).